The primary structure comprises 242 residues: Ribonuclease 3 (242 aa).

Positions alanine 12–glycine 139 constitute an RNase III domain. Residue glutamate 51 participates in Mg(2+) binding. Aspartate 55 is an active-site residue. Positions 125 and 128 each coordinate Mg(2+). The active site involves glutamate 128. One can recognise a DRBM domain in the interval leucine 165–serine 236.

It belongs to the ribonuclease III family. Homodimer. Requires Mg(2+) as cofactor.

Its subcellular location is the cytoplasm. It carries out the reaction Endonucleolytic cleavage to 5'-phosphomonoester.. Its function is as follows. Digests double-stranded RNA. Involved in the processing of primary rRNA transcript to yield the immediate precursors to the large and small rRNAs (23S and 16S). Processes some mRNAs, and tRNAs when they are encoded in the rRNA operon. Processes pre-crRNA and tracrRNA of type II CRISPR loci if present in the organism. The polypeptide is Ribonuclease 3 (Bifidobacterium longum (strain NCC 2705)).